A 119-amino-acid polypeptide reads, in one-letter code: Small ribosomal subunit protein bS16 (119 aa).

It belongs to the bacterial ribosomal protein bS16 family.

The protein is Small ribosomal subunit protein bS16 of Chlamydia abortus (strain DSM 27085 / S26/3) (Chlamydophila abortus).